The primary structure comprises 385 residues: Probable splicing factor YJU2B (385 aa).

A disordered region spans residues 1 to 26 (MGERKGQNKYYPPDFNPEKHGSLNRY). At Ser-40 the chain carries Phosphoserine. Positions 182–214 (LNSMLRRHFREKKKAMQEEEEKDQALQAKASLA) form a coiled coil. The disordered stretch occupies residues 257–385 (PSAQGPSASS…VADYSDSESE (129 aa)). Low complexity predominate over residues 258 to 271 (SAQGPSASSSKASS). Ser-306 is subject to Phosphoserine. The span at 359 to 373 (GSSQEDLLNPNTPNA) shows a compositional bias: polar residues.

Belongs to the CWC16 family.

Its subcellular location is the nucleus. In terms of biological role, may be involved in mRNA splicing. The protein is Probable splicing factor YJU2B (Yju2b) of Mus musculus (Mouse).